We begin with the raw amino-acid sequence, 206 residues long: Large ribosomal subunit protein uL13 (206 aa).

This sequence belongs to the universal ribosomal protein uL13 family.

The chain is Large ribosomal subunit protein uL13 (RPL13A) from Picea mariana (Black spruce).